A 448-amino-acid chain; its full sequence is Tryptophan dimethylallyltransferase 1 (448 aa).

L-tryptophan-binding positions include 80–81 and E89; that span reads IL. R100, K186, and Y188 together coordinate substrate. Positions 190 and 249 each coordinate L-tryptophan. 7 residues coordinate substrate: R262, K264, Y266, Q348, Y350, Y414, and Y418.

It belongs to the tryptophan dimethylallyltransferase family. As to quaternary structure, homodimer.

It catalyses the reaction L-tryptophan + dimethylallyl diphosphate = 4-(3-methylbut-2-enyl)-L-tryptophan + diphosphate. Its pathway is alkaloid biosynthesis; ergot alkaloid biosynthesis. Functionally, tryptophan dimethylallyltransferase; part of the gene cluster that mediates the biosynthesis of fungal ergot alkaloid. DmaW catalyzes the first step of ergot alkaloid biosynthesis by condensing dimethylallyl diphosphate (DMAP) and tryptophan to form 4-dimethylallyl-L-tryptophan. The second step is catalyzed by the methyltransferase easF that methylates 4-dimethylallyl-L-tryptophan in the presence of S-adenosyl-L-methionine, resulting in the formation of 4-dimethylallyl-L-abrine. The catalase easC and the FAD-dependent oxidoreductase easE then transform 4-dimethylallyl-L-abrine to chanoclavine-I which is further oxidized by easD in the presence of NAD(+), resulting in the formation of chanoclavine-I aldehyde. Agroclavine dehydrogenase easG then mediates the conversion of chanoclavine-I aldehyde to agroclavine via a non-enzymatic adduct reaction: the substrate is an iminium intermediate that is formed spontaneously from chanoclavine-I aldehyde in the presence of glutathione. The presence of easA is not required to complete this reaction. Further conversion of agroclavine to paspalic acid is a two-step process involving oxidation of agroclavine to elymoclavine and of elymoclavine to paspalic acid, the second step being performed by the elymoclavine oxidase cloA. Paspalic acid is then further converted to D-lysergic acid. Ergopeptines are assembled from D-lysergic acid and three different amino acids by the D-lysergyl-peptide-synthetases composed each of a monomudular and a trimodular nonribosomal peptide synthetase subunit. LpsB and lpsC encode the monomodular subunits responsible for D-lysergic acid activation and incorporation into the ergopeptine backbone. LpsA1 and A2 subunits encode the trimodular nonribosomal peptide synthetase assembling the tripeptide portion of ergopeptines. LpsA1 is responsible for formation of the major ergopeptine, ergotamine, and lpsA2 for alpha-ergocryptine, the minor ergopeptine of the total alkaloid mixture elaborated by C.purpurea. D-lysergyl-tripeptides are assembled by the nonribosomal peptide synthetases and released as N-(D-lysergyl-aminoacyl)-lactams. Cyclolization of the D-lysergyl-tripeptides is performed by the Fe(2+)/2-ketoglutarate-dependent dioxygenase easH which introduces a hydroxyl group into N-(D-lysergyl-aminoacyl)-lactam at alpha-C of the aminoacyl residue followed by spontaneous condensation with the terminal lactam carbonyl group. This is Tryptophan dimethylallyltransferase 1 from Claviceps purpurea (strain 20.1) (Ergot fungus).